Here is a 314-residue protein sequence, read N- to C-terminus: Olfactory receptor 52K1 (314 aa).

At 1–27 (MLPSNITSTHPAVFLLVGIPGLEHLHA) the chain is on the extracellular side. N-linked (GlcNAc...) asparagine glycosylation occurs at asparagine 5. Residues 28–48 (WISIPFCFAYTLALLGNCTLL) traverse the membrane as a helical segment. At 49-56 (FIIQADAA) the chain is on the cytoplasmic side. A helical membrane pass occupies residues 57–77 (LHEPMYLFLAMLATIDLVLSS). At 78–101 (TTLPKMLAIFWFRDQEINFFACLV) the chain is on the extracellular side. Cysteine 99 and cysteine 191 form a disulfide bridge. Residues 102–122 (QMFFLHSFSIMESAVLLAMAF) form a helical membrane-spanning segment. Residues 123 to 141 (DRYVAICKPLHYTTVLTGS) lie on the Cytoplasmic side of the membrane. The chain crosses the membrane as a helical span at residues 142–162 (LITKIGMAAVARAVTLMTPLP). Residues 163-198 (FLLRRFHYCRGPVIAHCYCEHMAVVRLACGDTSFNN) lie on the Extracellular side of the membrane. The chain crosses the membrane as a helical span at residues 199 to 219 (IYGIAVAMFIVVLDLLFVILS). Topologically, residues 220 to 239 (YVFILQAVLQLASQEARYKA) are cytoplasmic. Residues 240-260 (FGTCVSHIGAILSTYTPVVIS) form a helical membrane-spanning segment. Residues 261 to 275 (SVMHRVARHAAPRVH) are Extracellular-facing. A helical transmembrane segment spans residues 276–296 (ILLAIFYLLFPPMVNPIIYGV). Topologically, residues 297–314 (KTKQIREYVLSLFQRKNM) are cytoplasmic.

It belongs to the G-protein coupled receptor 1 family.

It localises to the cell membrane. Its function is as follows. Odorant receptor. This Homo sapiens (Human) protein is Olfactory receptor 52K1 (OR52K1).